A 395-amino-acid polypeptide reads, in one-letter code: Phosphopentomutase (395 aa).

Residues Asp14, Asp286, His291, Asp327, His328, and His339 each contribute to the Mn(2+) site.

This sequence belongs to the phosphopentomutase family. It depends on Mn(2+) as a cofactor.

It is found in the cytoplasm. It carries out the reaction 2-deoxy-alpha-D-ribose 1-phosphate = 2-deoxy-D-ribose 5-phosphate. The enzyme catalyses alpha-D-ribose 1-phosphate = D-ribose 5-phosphate. Its pathway is carbohydrate degradation; 2-deoxy-D-ribose 1-phosphate degradation; D-glyceraldehyde 3-phosphate and acetaldehyde from 2-deoxy-alpha-D-ribose 1-phosphate: step 1/2. Functionally, isomerase that catalyzes the conversion of deoxy-ribose 1-phosphate (dRib-1-P) and ribose 1-phosphate (Rib-1-P) to deoxy-ribose 5-phosphate (dRib-5-P) and ribose 5-phosphate (Rib-5-P), respectively. In Staphylococcus saprophyticus subsp. saprophyticus (strain ATCC 15305 / DSM 20229 / NCIMB 8711 / NCTC 7292 / S-41), this protein is Phosphopentomutase.